Here is a 274-residue protein sequence, read N- to C-terminus: Proteasome subunit beta type-7-B (274 aa).

Residues 1–37 (MSQSSVDIPPKGGFSFDLCKRNDMLTQKGLKAPSFLK) constitute a propeptide, removed in mature form. Thr-40 serves as the catalytic Nucleophile.

This sequence belongs to the peptidase T1B family. As to quaternary structure, component of the 20S core complex of the 26S proteasome. The 26S proteasome is composed of a core protease (CP), known as the 20S proteasome, capped at one or both ends by the 19S regulatory particle (RP/PA700). The 20S proteasome core is composed of 28 subunits that are arranged in four stacked rings, resulting in a barrel-shaped structure. The two end rings are each formed by seven alpha subunits, and the two central rings are each formed by seven beta subunits. The catalytic chamber with the active sites is on the inside of the barrel.

Its subcellular location is the cytoplasm. It localises to the nucleus. It carries out the reaction Cleavage of peptide bonds with very broad specificity.. Functionally, the proteasome is a multicatalytic proteinase complex which is characterized by its ability to cleave peptides with Arg, Phe, Tyr, Leu, and Glu adjacent to the leaving group at neutral or slightly basic pH. The proteasome has an ATP-dependent proteolytic activity. The chain is Proteasome subunit beta type-7-B (PBB2) from Arabidopsis thaliana (Mouse-ear cress).